A 110-amino-acid chain; its full sequence is Large ribosomal subunit protein uL22 (110 aa).

It belongs to the universal ribosomal protein uL22 family. Part of the 50S ribosomal subunit.

This protein binds specifically to 23S rRNA; its binding is stimulated by other ribosomal proteins, e.g. L4, L17, and L20. It is important during the early stages of 50S assembly. It makes multiple contacts with different domains of the 23S rRNA in the assembled 50S subunit and ribosome. Functionally, the globular domain of the protein is located near the polypeptide exit tunnel on the outside of the subunit, while an extended beta-hairpin is found that lines the wall of the exit tunnel in the center of the 70S ribosome. The polypeptide is Large ribosomal subunit protein uL22 (Pseudomonas savastanoi pv. phaseolicola (strain 1448A / Race 6) (Pseudomonas syringae pv. phaseolicola (strain 1448A / Race 6))).